A 250-amino-acid polypeptide reads, in one-letter code: Imidazole glycerol phosphate synthase subunit HisF (250 aa).

Residues Asp11 and Asp130 contribute to the active site.

This sequence belongs to the HisA/HisF family. Heterodimer of HisH and HisF.

The protein localises to the cytoplasm. The catalysed reaction is 5-[(5-phospho-1-deoxy-D-ribulos-1-ylimino)methylamino]-1-(5-phospho-beta-D-ribosyl)imidazole-4-carboxamide + L-glutamine = D-erythro-1-(imidazol-4-yl)glycerol 3-phosphate + 5-amino-1-(5-phospho-beta-D-ribosyl)imidazole-4-carboxamide + L-glutamate + H(+). Its pathway is amino-acid biosynthesis; L-histidine biosynthesis; L-histidine from 5-phospho-alpha-D-ribose 1-diphosphate: step 5/9. Functionally, IGPS catalyzes the conversion of PRFAR and glutamine to IGP, AICAR and glutamate. The HisF subunit catalyzes the cyclization activity that produces IGP and AICAR from PRFAR using the ammonia provided by the HisH subunit. This Elusimicrobium minutum (strain Pei191) protein is Imidazole glycerol phosphate synthase subunit HisF.